Consider the following 385-residue polypeptide: DNA replication and repair protein RecF (385 aa).

30-37 provides a ligand contact to ATP; that stretch reads GPNGYGKT.

This sequence belongs to the RecF family.

It localises to the cytoplasm. Its function is as follows. The RecF protein is involved in DNA metabolism; it is required for DNA replication and normal SOS inducibility. RecF binds preferentially to single-stranded, linear DNA. It also seems to bind ATP. In Mycobacterium bovis (strain ATCC BAA-935 / AF2122/97), this protein is DNA replication and repair protein RecF.